The chain runs to 413 residues: Arginine biosynthesis bifunctional protein ArgJ (413 aa).

Positions 160, 186, 197, 284, 408, and 413 each coordinate substrate. The active-site Nucleophile is Thr-197.

Belongs to the ArgJ family. As to quaternary structure, heterotetramer of two alpha and two beta chains.

The protein resides in the cytoplasm. The enzyme catalyses N(2)-acetyl-L-ornithine + L-glutamate = N-acetyl-L-glutamate + L-ornithine. It carries out the reaction L-glutamate + acetyl-CoA = N-acetyl-L-glutamate + CoA + H(+). It functions in the pathway amino-acid biosynthesis; L-arginine biosynthesis; L-ornithine and N-acetyl-L-glutamate from L-glutamate and N(2)-acetyl-L-ornithine (cyclic): step 1/1. It participates in amino-acid biosynthesis; L-arginine biosynthesis; N(2)-acetyl-L-ornithine from L-glutamate: step 1/4. In terms of biological role, catalyzes two activities which are involved in the cyclic version of arginine biosynthesis: the synthesis of N-acetylglutamate from glutamate and acetyl-CoA as the acetyl donor, and of ornithine by transacetylation between N(2)-acetylornithine and glutamate. The chain is Arginine biosynthesis bifunctional protein ArgJ from Burkholderia pseudomallei (strain 1710b).